The sequence spans 433 residues: Pseudopaline synthase (433 aa).

The helical transmembrane segment at Ser7 to Leu27 threads the bilayer. NAD(+) is bound by residues Leu16 to Val19, Asn39 to His40, and Thr154. His219 serves as the catalytic Proton donor/acceptor. Glu364 serves as a coordination point for NAD(+).

It belongs to the staphylopine dehydrogenase family. Homodimer. Interacts with CntL.

It is found in the cell membrane. It catalyses the reaction pseudopaline + NAD(+) + H2O = (2S)-2-amino-4-{[(1S)-1-carboxy-2-(1H-imidazol-4-yl)ethyl]amino}butanoate + 2-oxoglutarate + NADH + H(+). In terms of biological role, catalyzes the NADH-dependent reductive condensation of alpha-ketoglutarate to the intermediate formed by the adjacently encoded enzyme CntL, namely (2S)-2-amino-4-{[(1S)-1-carboxy-2-(1H-imidazol-4-yl)ethyl]amino}butanoate, leading to the production of pseudopaline. This is the last step in the biosynthesis of the metallophore pseudopaline, which is involved in the acquisition of nickel and zinc, and thus enables bacterial growth inside the host, where metal access is limited. Therefore, this enzyme probably contributes to Pseudomonas virulence. Can use neither pyruvate nor NADPH in place of alpha-ketoglutarate and NADH, respectively. The protein is Pseudopaline synthase of Pseudomonas aeruginosa (strain UCBPP-PA14).